A 396-amino-acid polypeptide reads, in one-letter code: Elongation factor Tu (396 aa).

One can recognise a tr-type G domain in the interval 10–206; that stretch reads KPHVNVGTIG…ALDTYIPTPE (197 aa). Residues 19 to 26 form a G1 region; it reads GHVDHGKT. GTP is bound at residue 19–26; it reads GHVDHGKT. T26 contacts Mg(2+). The segment at 60–64 is G2; the sequence is GITIN. The G3 stretch occupies residues 81 to 84; the sequence is DCPG. GTP is bound by residues 81-85 and 136-139; these read DCPGH and NKCD. A G4 region spans residues 136–139; it reads NKCD. Positions 174–176 are G5; it reads SAK.

Belongs to the TRAFAC class translation factor GTPase superfamily. Classic translation factor GTPase family. EF-Tu/EF-1A subfamily. Monomer.

The protein localises to the cytoplasm. It catalyses the reaction GTP + H2O = GDP + phosphate + H(+). GTP hydrolase that promotes the GTP-dependent binding of aminoacyl-tRNA to the A-site of ribosomes during protein biosynthesis. This Paraburkholderia xenovorans (strain LB400) protein is Elongation factor Tu.